A 291-amino-acid chain; its full sequence is Porphobilinogen deaminase (291 aa).

S-(dipyrrolylmethanemethyl)cysteine is present on Cys237.

This sequence belongs to the HMBS family. In terms of assembly, monomer. Dipyrromethane serves as cofactor.

It catalyses the reaction 4 porphobilinogen + H2O = hydroxymethylbilane + 4 NH4(+). The protein operates within porphyrin-containing compound metabolism; protoporphyrin-IX biosynthesis; coproporphyrinogen-III from 5-aminolevulinate: step 2/4. Functionally, tetrapolymerization of the monopyrrole PBG into the hydroxymethylbilane pre-uroporphyrinogen in several discrete steps. In Clostridium perfringens (strain ATCC 13124 / DSM 756 / JCM 1290 / NCIMB 6125 / NCTC 8237 / Type A), this protein is Porphobilinogen deaminase.